Reading from the N-terminus, the 1230-residue chain is DNA-directed RNA polymerase, mitochondrial (1230 aa).

The N-terminal 41 residues, 1–41, are a transit peptide targeting the mitochondrion; the sequence is MSALCWGRGAAGLKRALRPCGRPGLPGKEGTAGGVCGPRRS. Disordered stretches follow at residues 18-55, 95-115, and 731-750; these read RPCGRPGLPGKEGTAGGVCGPRRSSSASPQEQDQDRRK, GSGDGSLQPPRKVQMGAKDAT, and VPAPPSEAPQPPEAHLPHSA. The span at 732–744 shows a compositional bias: pro residues; that stretch reads PAPPSEAPQPPEA. Residues 802–1230 are mediates interaction with TEFM; the sequence is FRGRTYPCPP…QVKRSTYFFS (429 aa). Residues D922, K991, and D1151 contribute to the active site.

Belongs to the phage and mitochondrial RNA polymerase family. Homodimer. Component of the mitochondrial transcription initiation complex, composed at least of TFB2M, TFAM and POLRMT. In this complex TFAM recruits POLRMT to the promoter whereas TFB2M induces structural changes in POLRMT to enable promoter opening and trapping of the DNA non-template strand. Upon metabolic stress, forms a complex composed of FOXO3, SIRT3 and mitochondrial RNA polymerase POLRMT; the complex is recruited to mtDNA in a SIRT3-dependent manner. Also forms a complex composed of FOXO3, SIRT3, TFAM and POLRMT. Interacts with TFB1M and TFB2M, leading to the stimulation of transcription. Interacts with TEFM. Interacts with MTRES1.

The protein localises to the mitochondrion. It carries out the reaction RNA(n) + a ribonucleoside 5'-triphosphate = RNA(n+1) + diphosphate. In terms of biological role, DNA-dependent RNA polymerase catalyzes the transcription of mitochondrial DNA into RNA using the four ribonucleoside triphosphates as substrates. Component of the mitochondrial transcription initiation complex, composed at least of TFB2M, TFAM and POLRMT that is required for basal transcription of mitochondrial DNA. In this complex, TFAM recruits POLRMT to a specific promoter whereas TFB2M induces structural changes in POLRMT to enable promoter opening and trapping of the DNA non-template strand. Has DNA primase activity. Catalyzes the synthesis of short RNA primers that are necessary for the initiation of lagging-strand DNA synthesis from the origin of light-strand DNA replication (OriL). The protein is DNA-directed RNA polymerase, mitochondrial of Homo sapiens (Human).